The primary structure comprises 63 residues: STIQIDGDVVTRLLKGRDTAGNSVVIGVHKDAVDVSFRYWSFLIDALGRFAGKAVNTLVGDTG.

This is an uncharacterized protein from Azospirillum brasilense.